The sequence spans 259 residues: Phosphatidylglycerol--prolipoprotein diacylglyceryl transferase (259 aa).

The next 4 helical transmembrane spans lie at 10–30 (IGLL…LFAY), 50–70 (IISW…ILFY), 86–106 (WKGG…MYIF), and 112–132 (IKFL…IFLG). Arg133 is an a 1,2-diacyl-sn-glycero-3-phospho-(1'-sn-glycerol) binding site. A run of 3 helical transmembrane segments spans residues 169 to 189 (LYEA…LFFF), 197 to 217 (GMLF…IEFV), and 227 to 247 (ILFN…ILGI).

Belongs to the Lgt family.

The protein resides in the cell inner membrane. The catalysed reaction is L-cysteinyl-[prolipoprotein] + a 1,2-diacyl-sn-glycero-3-phospho-(1'-sn-glycerol) = an S-1,2-diacyl-sn-glyceryl-L-cysteinyl-[prolipoprotein] + sn-glycerol 1-phosphate + H(+). It participates in protein modification; lipoprotein biosynthesis (diacylglyceryl transfer). In terms of biological role, catalyzes the transfer of the diacylglyceryl group from phosphatidylglycerol to the sulfhydryl group of the N-terminal cysteine of a prolipoprotein, the first step in the formation of mature lipoproteins. The sequence is that of Phosphatidylglycerol--prolipoprotein diacylglyceryl transferase from Ehrlichia ruminantium (strain Gardel).